A 190-amino-acid polypeptide reads, in one-letter code: Segregation and condensation protein B (190 aa).

It belongs to the ScpB family. As to quaternary structure, homodimer. Homodimerization may be required to stabilize the binding of ScpA to the Smc head domains. Component of a cohesin-like complex composed of ScpA, ScpB and the Smc homodimer, in which ScpA and ScpB bind to the head domain of Smc. The presence of the three proteins is required for the association of the complex with DNA.

Its subcellular location is the cytoplasm. In terms of biological role, participates in chromosomal partition during cell division. May act via the formation of a condensin-like complex containing Smc and ScpA that pull DNA away from mid-cell into both cell halves. The polypeptide is Segregation and condensation protein B (Alkaliphilus metalliredigens (strain QYMF)).